A 54-amino-acid polypeptide reads, in one-letter code: UPF0434 protein BCI_0256 (54 aa).

It belongs to the UPF0434 family.

The chain is UPF0434 protein BCI_0256 from Baumannia cicadellinicola subsp. Homalodisca coagulata.